The primary structure comprises 202 residues: Glycerol-3-phosphate acyltransferase (202 aa).

6 helical membrane-spanning segments follow: residues 2–22, 51–71, 80–100, 116–136, 137–157, and 158–178; these read INLL…AVVV, KAAI…VLLA, VDET…LFPL, ILFA…LIIA, FFFR…PFFY, and VLMN…VLLI.

Belongs to the PlsY family. Probably interacts with PlsX.

It localises to the cell inner membrane. The enzyme catalyses an acyl phosphate + sn-glycerol 3-phosphate = a 1-acyl-sn-glycero-3-phosphate + phosphate. It participates in lipid metabolism; phospholipid metabolism. Functionally, catalyzes the transfer of an acyl group from acyl-phosphate (acyl-PO(4)) to glycerol-3-phosphate (G3P) to form lysophosphatidic acid (LPA). This enzyme utilizes acyl-phosphate as fatty acyl donor, but not acyl-CoA or acyl-ACP. This Cupriavidus metallidurans (strain ATCC 43123 / DSM 2839 / NBRC 102507 / CH34) (Ralstonia metallidurans) protein is Glycerol-3-phosphate acyltransferase.